The following is a 353-amino-acid chain: Aromatic amino acid aminotransferase (353 aa).

K217 is modified (N6-(pyridoxal phosphate)lysine).

This sequence belongs to the class-II pyridoxal-phosphate-dependent aminotransferase family. In terms of assembly, homodimer. Pyridoxal 5'-phosphate is required as a cofactor.

The enzyme catalyses an aromatic L-alpha-amino acid + 2-oxoglutarate = an aromatic oxo-acid + L-glutamate. Functionally, aminotransferase that catalyzes the conversion of aromatic amino acids and 2-oxoglutarate into corresponding aromatic oxo acids and L-glutamate. This is Aromatic amino acid aminotransferase from Mycobacterium bovis (strain ATCC BAA-935 / AF2122/97).